A 644-amino-acid polypeptide reads, in one-letter code: SURP and G-patch domain-containing protein 1 (644 aa).

Over residues 44-54 (REIEARMEQKA) the composition is skewed to basic and acidic residues. 2 disordered regions span residues 44-74 (REIE…ADAQ) and 98-122 (AQAS…KRPL). Thr-128 is subject to Phosphothreonine. Residues 188–230 (VIEKLARFVAEGGPELEKVAMEDYKDNPAFTFLHDKNSREFLY) form an SURP motif 1 repeat. Ser-253 carries the phosphoserine modification. An SURP motif 2 repeat occupies 263–306 (LAEKLARFIADGGPEVETIALQNNRENQAFSFLYDPNSQGYRYY). Disordered stretches follow at residues 316-342 (AKAG…PEAL) and 360-412 (PAVN…PSPL). A Phosphoserine modification is found at Ser-323. A compositionally biased stretch (pro residues) spans 360–369 (PAVNPTPSIP). The short motif at 379–385 (KRKRKSR) is the Nuclear localization signal element. Ser-408, Ser-410, Ser-413, and Ser-484 each carry phosphoserine. A G-patch domain is found at 561–608 (VENIGYQMLMKMGWKEGEGLGTEGQGIKNPVNKGATTIDGAGFGIDRP).

Component of the spliceosome.

Its subcellular location is the nucleus. Functionally, plays a role in pre-mRNA splicing. In Rattus norvegicus (Rat), this protein is SURP and G-patch domain-containing protein 1 (Sugp1).